Here is a 919-residue protein sequence, read N- to C-terminus: Alpha-amylase (919 aa).

An N-terminal signal peptide occupies residues 1–33 (MPATRRTARVRRVAAVTVTALAAALLPPLAARA). Ca(2+)-binding residues include asparagine 182 and aspartate 281. Residue aspartate 312 is the Nucleophile of the active site. A Ca(2+)-binding site is contributed by histidine 316. Residue glutamate 346 is the Proton donor of the active site. A disordered region spans residues 704 to 729 (ASGRLHHRHPARRGGAHRRLPGPRGR). Positions 707–724 (RLHHRHPARRGGAHRRLP) are enriched in basic residues.

It belongs to the glycosyl hydrolase 13 family. Monomer. Ca(2+) serves as cofactor.

The protein localises to the secreted. It carries out the reaction Endohydrolysis of (1-&gt;4)-alpha-D-glucosidic linkages in polysaccharides containing three or more (1-&gt;4)-alpha-linked D-glucose units.. This is Alpha-amylase (amy) from Streptomyces lividans.